A 369-amino-acid polypeptide reads, in one-letter code: S-adenosylmethionine:tRNA ribosyltransferase-isomerase (369 aa).

Belongs to the QueA family. As to quaternary structure, monomer.

Its subcellular location is the cytoplasm. The enzyme catalyses 7-aminomethyl-7-carbaguanosine(34) in tRNA + S-adenosyl-L-methionine = epoxyqueuosine(34) in tRNA + adenine + L-methionine + 2 H(+). It participates in tRNA modification; tRNA-queuosine biosynthesis. Functionally, transfers and isomerizes the ribose moiety from AdoMet to the 7-aminomethyl group of 7-deazaguanine (preQ1-tRNA) to give epoxyqueuosine (oQ-tRNA). The chain is S-adenosylmethionine:tRNA ribosyltransferase-isomerase from Synechococcus sp. (strain CC9311).